The primary structure comprises 423 residues: Serine--tRNA ligase (423 aa).

230-232 (TAE) contacts L-serine. Position 261–263 (261–263 (RSE)) interacts with ATP. Residue glutamate 284 coordinates L-serine. An ATP-binding site is contributed by 348–351 (EISS). Position 384 (serine 384) interacts with L-serine.

The protein belongs to the class-II aminoacyl-tRNA synthetase family. Type-1 seryl-tRNA synthetase subfamily. In terms of assembly, homodimer. The tRNA molecule binds across the dimer.

It is found in the cytoplasm. The catalysed reaction is tRNA(Ser) + L-serine + ATP = L-seryl-tRNA(Ser) + AMP + diphosphate + H(+). It catalyses the reaction tRNA(Sec) + L-serine + ATP = L-seryl-tRNA(Sec) + AMP + diphosphate + H(+). It functions in the pathway aminoacyl-tRNA biosynthesis; selenocysteinyl-tRNA(Sec) biosynthesis; L-seryl-tRNA(Sec) from L-serine and tRNA(Sec): step 1/1. In terms of biological role, catalyzes the attachment of serine to tRNA(Ser). Is also able to aminoacylate tRNA(Sec) with serine, to form the misacylated tRNA L-seryl-tRNA(Sec), which will be further converted into selenocysteinyl-tRNA(Sec). The polypeptide is Serine--tRNA ligase (Syntrophobacter fumaroxidans (strain DSM 10017 / MPOB)).